We begin with the raw amino-acid sequence, 393 residues long: Arginine--pyruvate transaminase AruH (393 aa).

Residue lysine 237 is modified to N6-(pyridoxal phosphate)lysine.

It belongs to the class-I pyridoxal-phosphate-dependent aminotransferase family. As to quaternary structure, homodimer. Pyridoxal 5'-phosphate is required as a cofactor.

The enzyme catalyses L-arginine + pyruvate = 5-guanidino-2-oxopentanoate + L-alanine. Its pathway is amino-acid degradation; L-arginine degradation. Catalyzes the conversion of L-arginine into 2-ketoarginine via transamination. L-arginine is the best substrate, but it can also use L-lysine, L-methionine, L-leucine, ornithine and L-glutamine, which indicates that it may have a broader physiological function in amino acid catabolism. This Pseudomonas aeruginosa (strain ATCC 15692 / DSM 22644 / CIP 104116 / JCM 14847 / LMG 12228 / 1C / PRS 101 / PAO1) protein is Arginine--pyruvate transaminase AruH (aruH).